The sequence spans 66 residues: DNA-directed RNA polymerase subunit Rpo10 (66 aa).

Positions 7, 10, 44, and 45 each coordinate Zn(2+).

Belongs to the archaeal Rpo10/eukaryotic RPB10 RNA polymerase subunit family. As to quaternary structure, part of the RNA polymerase complex. Zn(2+) is required as a cofactor.

Its subcellular location is the cytoplasm. The catalysed reaction is RNA(n) + a ribonucleoside 5'-triphosphate = RNA(n+1) + diphosphate. In terms of biological role, DNA-dependent RNA polymerase (RNAP) catalyzes the transcription of DNA into RNA using the four ribonucleoside triphosphates as substrates. This chain is DNA-directed RNA polymerase subunit Rpo10, found in Staphylothermus marinus (strain ATCC 43588 / DSM 3639 / JCM 9404 / F1).